A 623-amino-acid polypeptide reads, in one-letter code: Glutathione import ATP-binding protein GsiA (623 aa).

ABC transporter domains lie at 15-269 (VSGL…QTLL) and 325-564 (LRSG…RKLM). Residues 49-56 (GESGSGKS) and 357-364 (GESGSGKS) contribute to the ATP site.

The protein belongs to the ABC transporter superfamily. Glutathione importer (TC 3.A.1.5.11) family. As to quaternary structure, the complex is composed of two ATP-binding proteins (GsiA), two transmembrane proteins (GsiC and GsiD) and a solute-binding protein (GsiB).

It is found in the cell inner membrane. It catalyses the reaction glutathione(out) + ATP + H2O = glutathione(in) + ADP + phosphate + H(+). Part of the ABC transporter complex GsiABCD involved in glutathione import. Responsible for energy coupling to the transport system. This Salmonella typhimurium (strain LT2 / SGSC1412 / ATCC 700720) protein is Glutathione import ATP-binding protein GsiA.